Here is a 106-residue protein sequence, read N- to C-terminus: Small ribosomal subunit protein uS10 (106 aa).

Belongs to the universal ribosomal protein uS10 family. As to quaternary structure, part of the 30S ribosomal subunit.

In terms of biological role, involved in the binding of tRNA to the ribosomes. In Pyrobaculum arsenaticum (strain DSM 13514 / JCM 11321 / PZ6), this protein is Small ribosomal subunit protein uS10.